Consider the following 686-residue polypeptide: tRNA wybutosine-synthesizing protein 4 (686 aa).

Residues methionine 1–alanine 10 are compositionally biased toward basic and acidic residues. The segment at methionine 1–alanine 21 is disordered. Residues arginine 59, glycine 89, aspartate 114, aspartate 161 to leucine 162, and glutamate 188 contribute to the S-adenosyl-L-methionine site.

It belongs to the methyltransferase superfamily. LCMT family. As to quaternary structure, interacts with RNF144B/IBRDC2.

It carries out the reaction 7-[(3S)-3-amino-3-carboxypropyl]wyosine(37) in tRNA(Phe) + S-adenosyl-L-methionine = 7-[(3S)-(3-amino-3-methoxycarbonyl)propyl]wyosine(37) in tRNA(Phe) + S-adenosyl-L-homocysteine. The enzyme catalyses 7-[(3S)-(3-amino-3-methoxycarbonyl)propyl]wyosine(37) in tRNA(Phe) + S-adenosyl-L-methionine + CO2 = wybutosine(37) in tRNA(Phe) + S-adenosyl-L-homocysteine + 2 H(+). The protein operates within tRNA modification; wybutosine-tRNA(Phe) biosynthesis. Its function is as follows. Probable S-adenosyl-L-methionine-dependent methyltransferase that acts as a component of the wybutosine biosynthesis pathway. Wybutosine is a hyper modified guanosine with a tricyclic base found at the 3'-position adjacent to the anticodon of eukaryotic phenylalanine tRNA. May methylate the carboxyl group of leucine residues to form alpha-leucine ester residues. The polypeptide is tRNA wybutosine-synthesizing protein 4 (LCMT2) (Homo sapiens (Human)).